Here is a 502-residue protein sequence, read N- to C-terminus: Putative diacyglycerol O-acyltransferase Rv1760 (502 aa).

The Proton acceptor role is filled by His-174.

It belongs to the long-chain O-acyltransferase family.

It catalyses the reaction an acyl-CoA + a 1,2-diacyl-sn-glycerol = a triacyl-sn-glycerol + CoA. The enzyme catalyses di-(9Z)-octadecenoylglycerol + (9Z)-octadecenoyl-CoA = 1,2,3-tri-(9Z-octadecenoyl)-glycerol + CoA. It functions in the pathway glycerolipid metabolism; triacylglycerol biosynthesis. Its function is as follows. Catalyzes the terminal and only committed step in triacylglycerol synthesis by using diacylglycerol and fatty acyl CoA as substrates. Required for storage lipid synthesis. In terms of biological role, upon expression in E.coli functions weakly as a triacylglycerol synthase, making triacylglycerol (TG) from diolein and long-chain fatty acyl-CoA. Has very weak wax synthase activity, incorporating palmityl alcohol into wax esters in the presence of palmitoyl-CoA. The polypeptide is Putative diacyglycerol O-acyltransferase Rv1760 (Mycobacterium tuberculosis (strain ATCC 25618 / H37Rv)).